A 393-amino-acid polypeptide reads, in one-letter code: Elongation factor Tu (393 aa).

A tr-type G domain is found at 10-203 (KPHVNIGTIG…AVDDYIPEPV (194 aa)). A G1 region spans residues 19-26 (GHVDHGKT). 19 to 26 (GHVDHGKT) serves as a coordination point for GTP. T26 provides a ligand contact to Mg(2+). A G2 region spans residues 60 to 64 (GITIS). A G3 region spans residues 81 to 84 (DCPG). Residues 81–85 (DCPGH) and 136–139 (NKVD) contribute to the GTP site. Residues 136–139 (NKVD) form a G4 region. Residues 173 to 175 (SAL) are G5.

This sequence belongs to the TRAFAC class translation factor GTPase superfamily. Classic translation factor GTPase family. EF-Tu/EF-1A subfamily. In terms of assembly, monomer.

The protein resides in the cytoplasm. It carries out the reaction GTP + H2O = GDP + phosphate + H(+). In terms of biological role, GTP hydrolase that promotes the GTP-dependent binding of aminoacyl-tRNA to the A-site of ribosomes during protein biosynthesis. The sequence is that of Elongation factor Tu from Chlorobaculum parvum (strain DSM 263 / NCIMB 8327) (Chlorobium vibrioforme subsp. thiosulfatophilum).